The chain runs to 272 residues: 3-methyl-2-oxobutanoate hydroxymethyltransferase (272 aa).

Mg(2+) contacts are provided by Asp-43 and Asp-82. 3-methyl-2-oxobutanoate-binding positions include 43–44, Asp-82, and Lys-112; that span reads DS. Position 114 (Glu-114) interacts with Mg(2+). Catalysis depends on Glu-179, which acts as the Proton acceptor.

It belongs to the PanB family. As to quaternary structure, homodecamer; pentamer of dimers. The cofactor is Mg(2+).

Its subcellular location is the cytoplasm. It catalyses the reaction 3-methyl-2-oxobutanoate + (6R)-5,10-methylene-5,6,7,8-tetrahydrofolate + H2O = 2-dehydropantoate + (6S)-5,6,7,8-tetrahydrofolate. It participates in cofactor biosynthesis; (R)-pantothenate biosynthesis; (R)-pantoate from 3-methyl-2-oxobutanoate: step 1/2. Catalyzes the reversible reaction in which hydroxymethyl group from 5,10-methylenetetrahydrofolate is transferred onto alpha-ketoisovalerate to form ketopantoate. In Staphylococcus aureus (strain Mu3 / ATCC 700698), this protein is 3-methyl-2-oxobutanoate hydroxymethyltransferase.